The following is a 208-amino-acid chain: Cytochrome c biogenesis ATP-binding export protein CcmA (208 aa).

Positions 2 to 206 (LEAKELTCAR…IRLTAEGRDE (205 aa)) constitute an ABC transporter domain. 34–41 (GPNGAGKT) lines the ATP pocket.

This sequence belongs to the ABC transporter superfamily. CcmA exporter (TC 3.A.1.107) family. The complex is composed of two ATP-binding proteins (CcmA) and two transmembrane proteins (CcmB).

It localises to the cell inner membrane. It carries out the reaction heme b(in) + ATP + H2O = heme b(out) + ADP + phosphate + H(+). In terms of biological role, part of the ABC transporter complex CcmAB involved in the biogenesis of c-type cytochromes; once thought to export heme, this seems not to be the case, but its exact role is uncertain. Responsible for energy coupling to the transport system. The protein is Cytochrome c biogenesis ATP-binding export protein CcmA of Tatumella citrea (Pantoea citrea).